Reading from the N-terminus, the 111-residue chain is Large ribosomal subunit protein uL24 (111 aa).

The protein belongs to the universal ribosomal protein uL24 family. As to quaternary structure, part of the 50S ribosomal subunit.

In terms of biological role, one of two assembly initiator proteins, it binds directly to the 5'-end of the 23S rRNA, where it nucleates assembly of the 50S subunit. Its function is as follows. One of the proteins that surrounds the polypeptide exit tunnel on the outside of the subunit. The polypeptide is Large ribosomal subunit protein uL24 (Heliobacterium modesticaldum (strain ATCC 51547 / Ice1)).